We begin with the raw amino-acid sequence, 1694 residues long: Immunoglobulin A1 protease autotransporter (1694 aa).

The signal sequence occupies residues 1–25 (MLNKKFKLNFIALTVAYALTPYTEA). A Peptidase S6 domain is found at 26–332 (ALVRDDVDYQ…NIYKPEFAKT (307 aa)). Serine 288 is an active-site residue. The segment at 991 to 1403 (VEKRNQTVDT…GSDRSTVALR (413 aa)) is disordered. The segment covering 997–1021 (TVDTTNITTPNNIQADVPSVPSNNE) has biased composition (polar residues). The span at 1037–1047 (TPSETTETVAE) shows a compositional bias: low complexity. Positions 1049 to 1061 (SKQESKTVEKNEQ) are enriched in basic and acidic residues. A compositionally biased stretch (polar residues) spans 1082–1095 (KANTQTNEVAQSGS). Composition is skewed to basic and acidic residues over residues 1104-1124 (EIKE…KDEI) and 1142-1154 (APKE…KVEE). Polar residues-rich tracts occupy residues 1155-1178 (TQVQ…SPNS) and 1199-1210 (VSKNQTENTTDQ). Over residues 1211-1226 (PTEREKTAKVETEKTQ) the composition is skewed to basic and acidic residues. 3 stretches are compositionally biased toward polar residues: residues 1227–1247 (EPPQ…TVQP), 1255–1297 (NVPT…TAIT), and 1308–1336 (TETA…NSES). The segment covering 1352-1370 (ETSAEETTAASTDETTIAD) has biased composition (low complexity). The span at 1374–1384 (RSKPNRRSRRS) shows a compositional bias: basic residues. The region spanning 1442–1694 (NNEGQYNVWV…TAELKLSFSF (253 aa)) is the Autotransporter domain.

The protein resides in the periplasm. Its subcellular location is the secreted. It localises to the cell surface. The protein localises to the cell outer membrane. The catalysed reaction is Cleavage of immunoglobulin A molecules at certain Pro-|-Xaa bonds in the hinge region. No small molecule substrates are known.. Virulence factor; cleaves host immunoglobulin A producing intact Fc and Fab fragments. This chain is Immunoglobulin A1 protease autotransporter (iga), found in Haemophilus influenzae (strain ATCC 51907 / DSM 11121 / KW20 / Rd).